The following is a 515-amino-acid chain: Probable NADPH:adrenodoxin oxidoreductase, mitochondrial (515 aa).

Residues Ala52, Glu73, Leu81, and Ile119 each coordinate FAD. NADP(+)-binding positions include Gln191–Val194, Arg236–Arg237, and Glu248. Residues Trp419 and Gly426–Ile428 contribute to the FAD site. Position 426 (Gly426) interacts with NADP(+).

It belongs to the ferredoxin--NADP reductase type 1 family. FAD serves as cofactor.

The protein resides in the mitochondrion inner membrane. The catalysed reaction is 2 reduced [adrenodoxin] + NADP(+) + H(+) = 2 oxidized [adrenodoxin] + NADPH. The polypeptide is Probable NADPH:adrenodoxin oxidoreductase, mitochondrial (fdxr) (Dictyostelium discoideum (Social amoeba)).